The sequence spans 389 residues: Chalcone synthase 6 (389 aa).

The active site involves C164.

It belongs to the thiolase-like superfamily. Chalcone/stilbene synthases family.

It carries out the reaction (E)-4-coumaroyl-CoA + 3 malonyl-CoA + 3 H(+) = 2',4,4',6'-tetrahydroxychalcone + 3 CO2 + 4 CoA. Its pathway is secondary metabolite biosynthesis; flavonoid biosynthesis. Its function is as follows. The primary product of this enzyme is 4,2',4',6'-tetrahydroxychalcone (also termed naringenin-chalcone or chalcone) which can under specific conditions spontaneously isomerize into naringenin. In Pisum sativum (Garden pea), this protein is Chalcone synthase 6 (CHS6).